Here is a 351-residue protein sequence, read N- to C-terminus: Translation initiation factor eIF2B subunit beta (351 aa).

This sequence belongs to the eIF-2B alpha/beta/delta subunits family. Component of the translation initiation factor 2B (eIF2B) complex which is a heterodecamer of two sets of five different subunits: alpha, beta, gamma, delta and epsilon. Subunits alpha, beta and delta comprise a regulatory subcomplex and subunits epsilon and gamma comprise a catalytic subcomplex. Within the complex, the hexameric regulatory complex resides at the center, with the two heterodimeric catalytic subcomplexes bound on opposite sides.

It localises to the cytoplasm. The protein localises to the cytosol. Activated by the chemical integrated stress response (ISR) inhibitor ISRIB which stimulates guanine nucleotide exchange factor activity for both phosphorylated and unphosphorylated eIF2. Acts as a component of the translation initiation factor 2B (eIF2B) complex, which catalyzes the exchange of GDP for GTP on eukaryotic initiation factor 2 (eIF2) gamma subunit. Its guanine nucleotide exchange factor activity is repressed when bound to eIF2 complex phosphorylated on the alpha subunit, thereby limiting the amount of methionyl-initiator methionine tRNA available to the ribosome and consequently global translation is repressed. In Rattus norvegicus (Rat), this protein is Translation initiation factor eIF2B subunit beta (Eif2b2).